A 203-amino-acid chain; its full sequence is Shikimate kinase (203 aa).

Gly32 to Ala37 is an ATP binding site. Thr36 contacts Mg(2+). Residues Asp54, Arg78, and Gly100 each contribute to the substrate site. An ATP-binding site is contributed by Arg138. Arg157 contacts substrate.

Belongs to the shikimate kinase family. In terms of assembly, monomer. Mg(2+) is required as a cofactor.

The protein localises to the cytoplasm. The catalysed reaction is shikimate + ATP = 3-phosphoshikimate + ADP + H(+). It functions in the pathway metabolic intermediate biosynthesis; chorismate biosynthesis; chorismate from D-erythrose 4-phosphate and phosphoenolpyruvate: step 5/7. Its function is as follows. Catalyzes the specific phosphorylation of the 3-hydroxyl group of shikimic acid using ATP as a cosubstrate. This is Shikimate kinase from Mesorhizobium japonicum (strain LMG 29417 / CECT 9101 / MAFF 303099) (Mesorhizobium loti (strain MAFF 303099)).